The chain runs to 416 residues: Serine hydroxymethyltransferase (416 aa).

Residues Leu-118 and 122–124 each bind (6S)-5,6,7,8-tetrahydrofolate; that span reads GHL. N6-(pyridoxal phosphate)lysine is present on Lys-226. A (6S)-5,6,7,8-tetrahydrofolate-binding site is contributed by Glu-242.

It belongs to the SHMT family. As to quaternary structure, homodimer. The cofactor is pyridoxal 5'-phosphate.

Its subcellular location is the cytoplasm. It carries out the reaction (6R)-5,10-methylene-5,6,7,8-tetrahydrofolate + glycine + H2O = (6S)-5,6,7,8-tetrahydrofolate + L-serine. The protein operates within one-carbon metabolism; tetrahydrofolate interconversion. It participates in amino-acid biosynthesis; glycine biosynthesis; glycine from L-serine: step 1/1. Its function is as follows. Catalyzes the reversible interconversion of serine and glycine with tetrahydrofolate (THF) serving as the one-carbon carrier. This reaction serves as the major source of one-carbon groups required for the biosynthesis of purines, thymidylate, methionine, and other important biomolecules. Also exhibits THF-independent aldolase activity toward beta-hydroxyamino acids, producing glycine and aldehydes, via a retro-aldol mechanism. The chain is Serine hydroxymethyltransferase from Helicobacter pylori (strain J99 / ATCC 700824) (Campylobacter pylori J99).